The primary structure comprises 192 residues: Ribose 1,5-bisphosphate phosphokinase PhnN (192 aa).

15–22 (GPSGAGKD) serves as a coordination point for ATP.

The protein belongs to the ribose 1,5-bisphosphokinase family.

The catalysed reaction is alpha-D-ribose 1,5-bisphosphate + ATP = 5-phospho-alpha-D-ribose 1-diphosphate + ADP. Its pathway is metabolic intermediate biosynthesis; 5-phospho-alpha-D-ribose 1-diphosphate biosynthesis; 5-phospho-alpha-D-ribose 1-diphosphate from D-ribose 5-phosphate (route II): step 3/3. Its function is as follows. Catalyzes the phosphorylation of ribose 1,5-bisphosphate to 5-phospho-D-ribosyl alpha-1-diphosphate (PRPP). This chain is Ribose 1,5-bisphosphate phosphokinase PhnN, found in Brucella abortus biovar 1 (strain 9-941).